Here is a 361-residue protein sequence, read N- to C-terminus: Queuine tRNA-ribosyltransferase (361 aa).

Asp-92 serves as the catalytic Proton acceptor. Substrate-binding positions include 92 to 96 (DSGGF), Asp-146, Gln-189, and Gly-216. The interval 247 to 253 (GVGKPAD) is RNA binding. The active-site Nucleophile is Asp-266. Residues 271 to 275 (TRSGR) are RNA binding; important for wobble base 34 recognition. Residues Cys-304, Cys-306, Cys-309, and His-335 each coordinate Zn(2+).

The protein belongs to the queuine tRNA-ribosyltransferase family. In terms of assembly, homodimer. Within each dimer, one monomer is responsible for RNA recognition and catalysis, while the other monomer binds to the replacement base PreQ1. Zn(2+) is required as a cofactor.

The enzyme catalyses 7-aminomethyl-7-carbaguanine + guanosine(34) in tRNA = 7-aminomethyl-7-carbaguanosine(34) in tRNA + guanine. The protein operates within tRNA modification; tRNA-queuosine biosynthesis. Catalyzes the base-exchange of a guanine (G) residue with the queuine precursor 7-aminomethyl-7-deazaguanine (PreQ1) at position 34 (anticodon wobble position) in tRNAs with GU(N) anticodons (tRNA-Asp, -Asn, -His and -Tyr). Catalysis occurs through a double-displacement mechanism. The nucleophile active site attacks the C1' of nucleotide 34 to detach the guanine base from the RNA, forming a covalent enzyme-RNA intermediate. The proton acceptor active site deprotonates the incoming PreQ1, allowing a nucleophilic attack on the C1' of the ribose to form the product. After dissociation, two additional enzymatic reactions on the tRNA convert PreQ1 to queuine (Q), resulting in the hypermodified nucleoside queuosine (7-(((4,5-cis-dihydroxy-2-cyclopenten-1-yl)amino)methyl)-7-deazaguanosine). The protein is Queuine tRNA-ribosyltransferase of Rickettsia felis (strain ATCC VR-1525 / URRWXCal2) (Rickettsia azadi).